Consider the following 459-residue polypeptide: Ribulose bisphosphate carboxylase large chain (459 aa).

Lys4 bears the N6,N6,N6-trimethyllysine mark. Positions 113 and 163 each coordinate substrate. The active-site Proton acceptor is the Lys165. Residue Lys167 participates in substrate binding. Mg(2+) contacts are provided by Lys191, Asp193, and Glu194. Lys191 carries the post-translational modification N6-carboxylysine. His284 serves as the catalytic Proton acceptor. Substrate-binding residues include Arg285, His317, and Ser369.

Belongs to the RuBisCO large chain family. Type I subfamily. In terms of assembly, heterohexadecamer of 8 large chains and 8 small chains; disulfide-linked. The disulfide link is formed within the large subunit homodimers. Mg(2+) is required as a cofactor. The disulfide bond which can form in the large chain dimeric partners within the hexadecamer appears to be associated with oxidative stress and protein turnover.

The protein localises to the plastid. It localises to the chloroplast. The catalysed reaction is 2 (2R)-3-phosphoglycerate + 2 H(+) = D-ribulose 1,5-bisphosphate + CO2 + H2O. It catalyses the reaction D-ribulose 1,5-bisphosphate + O2 = 2-phosphoglycolate + (2R)-3-phosphoglycerate + 2 H(+). In terms of biological role, ruBisCO catalyzes two reactions: the carboxylation of D-ribulose 1,5-bisphosphate, the primary event in carbon dioxide fixation, as well as the oxidative fragmentation of the pentose substrate in the photorespiration process. Both reactions occur simultaneously and in competition at the same active site. The protein is Ribulose bisphosphate carboxylase large chain of Parnassia fimbriata (Fringed grass-of-Parnassus).